We begin with the raw amino-acid sequence, 78 residues long: U23-theraphotoxin-Cg1a 1 (78 aa).

An N-terminal signal peptide occupies residues 1 to 21 (MKTSVLVTVLGLAVISVLCSA). A propeptide spanning residues 22–49 (SQDEEQDMYDELLSAVFEVNDELQSEAR) is cleaved from the precursor. Disulfide bonds link Cys50/Cys64, Cys57/Cys69, and Cys63/Cys75.

It belongs to the neurotoxin 10 (Hwtx-1) family. 64 (Jztx-20) subfamily. As to expression, expressed by the venom gland.

It localises to the secreted. In terms of biological role, probable ion channel inhibitor. The chain is U23-theraphotoxin-Cg1a 1 from Chilobrachys guangxiensis (Chinese earth tiger tarantula).